The following is a 174-amino-acid chain: Scytalone dehydratase-like protein Arp1 (174 aa).

Tyr49 contributes to the substrate binding site. Catalysis depends on residues His84 and His109. Asn130 is a substrate binding site.

Belongs to the scytalone dehydratase family. Homotrimer. Each subunit contains an active site, located in the central part of the hydrophobic core of the monomer, which functions independently.

Functionally, scytalone dehydratase-like protein; part of the Pks2 gene cluster that mediates the formation of infectious structures (appressoria), enabling these fungi to kill insects faster. The product of the Pks2 gene cluster is different from the one of Pks1 and has still not been identified. This Metarhizium majus (strain ARSEF 297) protein is Scytalone dehydratase-like protein Arp1.